Consider the following 237-residue polypeptide: Uridylate kinase (237 aa).

12–15 (KLSG) serves as a coordination point for ATP. The involved in allosteric activation by GTP stretch occupies residues 20-25 (GDEGFG). Gly-54 serves as a coordination point for UMP. 2 residues coordinate ATP: Gly-55 and Arg-59. UMP-binding positions include Asp-74 and 135 to 142 (TGSPFFTT). Thr-162, Tyr-168, and Asp-171 together coordinate ATP.

The protein belongs to the UMP kinase family. As to quaternary structure, homohexamer.

Its subcellular location is the cytoplasm. It catalyses the reaction UMP + ATP = UDP + ADP. It participates in pyrimidine metabolism; CTP biosynthesis via de novo pathway; UDP from UMP (UMPK route): step 1/1. Its activity is regulated as follows. Allosterically activated by GTP. Inhibited by UTP. Functionally, catalyzes the reversible phosphorylation of UMP to UDP. This Mannheimia succiniciproducens (strain KCTC 0769BP / MBEL55E) protein is Uridylate kinase.